We begin with the raw amino-acid sequence, 408 residues long: Lysosomal phospholipase A and acyltransferase (408 aa).

An N-terminal signal peptide occupies residues 1 to 31 (MGLRRGPCPAALLPGGFLFLLLLADPALLAG). Aspartate 42 lines the substrate pocket. Residues cysteine 61 and cysteine 85 are joined by a disulfide bond. Asparagine 95 carries N-linked (GlcNAc...) asparagine glycosylation. Serine 194 acts as the Acyl-ester intermediate in catalysis. Serine 194 is a binding site for Zn(2+). Methionine 195 contributes to the substrate binding site. Asparagine 269 and asparagine 285 each carry an N-linked (GlcNAc...) asparagine glycan. Zn(2+)-binding residues include aspartate 336 and cysteine 351. Active-site charge relay system residues include aspartate 356 and histidine 388. Histidine 388 is a binding site for Zn(2+). N-linked (GlcNAc...) asparagine glycosylation is present at asparagine 394.

Belongs to the AB hydrolase superfamily. Lipase family. Post-translationally, N-glycosylated. N-glycosylation is important for maturation of the enzyme and normal subcellular location.

The protein localises to the secreted. It localises to the lysosome. Its subcellular location is the membrane. The catalysed reaction is a 1,2-diacyl-sn-glycero-3-phosphocholine + H2O = a 2-acyl-sn-glycero-3-phosphocholine + a fatty acid + H(+). It carries out the reaction 1-hexadecanoyl-2-(9Z-octadecenoyl)-sn-glycero-3-phosphocholine + H2O = 2-(9Z-octadecenoyl)-sn-glycero-3-phosphocholine + hexadecanoate + H(+). It catalyses the reaction 1,2-di-(9Z-octadecenoyl)-sn-glycero-3-phosphocholine + H2O = 2-(9Z-octadecenoyl)-sn-glycero-3-phosphocholine + (9Z)-octadecenoate + H(+). The enzyme catalyses 1-hexadecanoyl-2-glutaroyl-sn-glycero-3-phosphocholine + H2O = 2-glutaroyl-sn-glycero-3-phosphocholine + hexadecanoate + H(+). The catalysed reaction is 1-hexadecanoyl-2-nonadioyl-sn-glycero-3-phosphocholine + H2O = 2-nonadioyl-sn-glycero-3-phosphocholine + hexadecanoate + H(+). It carries out the reaction 1-hexadecanoyl-2-(5-oxopentanoyl)-sn-glycero-3-phosphocholine + H2O = 2-(5-oxopentanoyl)-sn-glycero-3-phosphocholine + hexadecanoate + H(+). It catalyses the reaction 1-hexadecanoyl-2-(9-oxononanoyl)-sn-glycero-3-phosphocholine + H2O = 2-(9-oxononanoyl)-sn-glycero-3-phosphocholine + hexadecanoate + H(+). The enzyme catalyses 1,2-dihexadecanoyl-sn-glycero-3-phosphocholine + H2O = 2-hexadecanoyl-sn-glycero-3-phosphocholine + hexadecanoate + H(+). The catalysed reaction is a 1,2-diacyl-sn-glycero-3-phosphocholine + H2O = a 1-acyl-sn-glycero-3-phosphocholine + a fatty acid + H(+). It carries out the reaction 1-hexadecanoyl-2-(9Z-octadecenoyl)-sn-glycero-3-phosphocholine + H2O = 1-hexadecanoyl-sn-glycero-3-phosphocholine + (9Z)-octadecenoate + H(+). It catalyses the reaction 1,2-di-(9Z-octadecenoyl)-sn-glycero-3-phosphocholine + H2O = 1-(9Z-octadecenoyl)-sn-glycero-3-phosphocholine + (9Z)-octadecenoate + H(+). The enzyme catalyses 1,2-dihexadecanoyl-sn-glycero-3-phosphocholine + H2O = 1-hexadecanoyl-sn-glycero-3-phosphocholine + hexadecanoate + H(+). The catalysed reaction is a 1-acyl-sn-glycero-3-phosphocholine + H2O = sn-glycerol 3-phosphocholine + a fatty acid + H(+). It carries out the reaction 1-hexadecanoyl-sn-glycero-3-phosphocholine + H2O = sn-glycerol 3-phosphocholine + hexadecanoate + H(+). It catalyses the reaction N-(acetyl)-sphing-4-enine + a 1,2-diacyl-sn-glycero-3-phosphoethanolamine = 1-O-acyl-N-(acetyl)-sphing-4-enine + a 2-acyl-sn-glycero-3-phosphoethanolamine. The enzyme catalyses 1-hexadecanoyl-2-(9Z-octadecenoyl)-sn-glycero-3-phosphoethanolamine + N-(acetyl)-sphing-4-enine = 2-(9Z-octadecenoyl)-sn-glycero-3-phosphoethanolamine + 1-hexadecanoyl-N-(acetyl)-sphing-4-enine. The catalysed reaction is 1-hexadecanoyl-2-(9Z,12Z-octadecadienoyl)-sn-glycero-3-phosphoethanolamine + N-(acetyl)-sphing-4-enine = 2-(9Z,12Z)-octadecadienoyl-sn-glycero-3-phosphoethanolamine + 1-hexadecanoyl-N-(acetyl)-sphing-4-enine. It carries out the reaction 1-hexadecanoyl-2-(5Z,8Z,11Z,14Z-eicosatetraenoyl)-sn-glycero-3-phosphoethanolamine + N-(acetyl)-sphing-4-enine = 2-(5Z,8Z,11Z,14Z)-eicosatetraenoyl-sn-glycero-3-phosphoethanolamine + 1-hexadecanoyl-N-(acetyl)-sphing-4-enine. It catalyses the reaction N-(acetyl)-sphing-4-enine + a 1,2-diacyl-sn-glycero-3-phosphoethanolamine = 1-O-acyl-N-(acetyl)-sphing-4-enine + a 1-acyl-sn-glycero-3-phosphoethanolamine. The enzyme catalyses 1-hexadecanoyl-2-(9Z-octadecenoyl)-sn-glycero-3-phosphoethanolamine + N-(acetyl)-sphing-4-enine = 1-(9Z-octadecenoyl)-N-(acetyl)-sphing-4-enine + 1-hexadecanoyl-sn-glycero-3-phosphoethanolamine. The catalysed reaction is 1-hexadecanoyl-2-(9Z,12Z-octadecadienoyl)-sn-glycero-3-phosphoethanolamine + N-(acetyl)-sphing-4-enine = 1-(9Z,12Z-octadecadienoyl)-N-acetylsphing-4-enine + 1-hexadecanoyl-sn-glycero-3-phosphoethanolamine. It carries out the reaction 1-hexadecanoyl-2-(5Z,8Z,11Z,14Z-eicosatetraenoyl)-sn-glycero-3-phosphoethanolamine + N-(acetyl)-sphing-4-enine = 1-(5Z,8Z,11Z,14Z)-eicosatetraenoyl-N-(acetyl)-sphing-4-enine + 1-hexadecanoyl-sn-glycero-3-phosphoethanolamine. It catalyses the reaction N-(acetyl)-sphing-4-enine + a 1,2-diacyl-sn-glycero-3-phosphocholine = 1-O-acyl-N-(acetyl)-sphing-4-enine + a 2-acyl-sn-glycero-3-phosphocholine. The enzyme catalyses 1-hexadecanoyl-2-(9Z-octadecenoyl)-sn-glycero-3-phosphocholine + N-(acetyl)-sphing-4-enine = 1-hexadecanoyl-N-(acetyl)-sphing-4-enine + 2-(9Z-octadecenoyl)-sn-glycero-3-phosphocholine. The catalysed reaction is 1-hexadecanoyl-2-(9Z,12Z-octadecadienoyl)-sn-glycero-3-phosphocholine + N-(acetyl)-sphing-4-enine = 2-(9Z,12Z-octadecadienoyl)-sn-glycero-3-phosphocholine + 1-hexadecanoyl-N-(acetyl)-sphing-4-enine. It carries out the reaction 1-hexadecanoyl-2-(5Z,8Z,11Z,14Z-eicosatetraenoyl)-sn-glycero-3-phosphocholine + N-(acetyl)-sphing-4-enine = 1-hexadecanoyl-N-(acetyl)-sphing-4-enine + 2-(5Z,8Z,11Z,14Z)-eicosatetraenoyl-sn-glycero-3-phosphocholine. It catalyses the reaction 1-hexadecanoyl-2-(4Z,7Z,10Z,13Z,16Z,19Z-docosahexaenoyl)-sn-glycero-3-phosphocholine + N-(acetyl)-sphing-4-enine = 2-(4Z,7Z,10Z,13Z,16Z,19Z-docosahexaenoyl)-sn-glycero-3-phosphocholine + 1-hexadecanoyl-N-(acetyl)-sphing-4-enine. The enzyme catalyses 1-hexadecanoyl-2-nonadioyl-sn-glycero-3-phosphocholine + N-(acetyl)-sphing-4-enine = 2-nonadioyl-sn-glycero-3-phosphocholine + 1-hexadecanoyl-N-(acetyl)-sphing-4-enine. The catalysed reaction is 1-octadecanoyl-2-(9Z-octadecenoyl)-sn-glycero-3-phosphocholine + N-(acetyl)-sphing-4-enine = 1-octadecanoyl-N-(acetyl)-sphing-4-enine + 2-(9Z-octadecenoyl)-sn-glycero-3-phosphocholine. It carries out the reaction 1-(9Z)-octadecenoyl-2-octadecanoyl-sn-glycero-3-phosphocholine + N-(acetyl)-sphing-4-enine = 2-octadecanoyl-sn-glycero-3-phosphocholine + 1-(9Z-octadecenoyl)-N-(acetyl)-sphing-4-enine. It catalyses the reaction 1-octadecanoyl-2-(5Z,8Z,11Z,14Z-eicosatetraenoyl)-sn-glycero-3-phosphocholine + N-(acetyl)-sphing-4-enine = 1-octadecanoyl-N-(acetyl)-sphing-4-enine + 2-(5Z,8Z,11Z,14Z)-eicosatetraenoyl-sn-glycero-3-phosphocholine. The enzyme catalyses 1-(9Z-octadecenoyl)-2-hexadecanoyl-sn-glycero-3-phosphocholine + N-(acetyl)-sphing-4-enine = 1-(9Z-octadecenoyl)-N-(acetyl)-sphing-4-enine + 2-hexadecanoyl-sn-glycero-3-phosphocholine. The catalysed reaction is N-(acetyl)-sphing-4-enine + a 1,2-diacyl-sn-glycero-3-phosphocholine = 1-O-acyl-N-(acetyl)-sphing-4-enine + a 1-acyl-sn-glycero-3-phosphocholine. It carries out the reaction 1-hexadecanoyl-2-(9Z-octadecenoyl)-sn-glycero-3-phosphocholine + N-(acetyl)-sphing-4-enine = 1-(9Z-octadecenoyl)-N-(acetyl)-sphing-4-enine + 1-hexadecanoyl-sn-glycero-3-phosphocholine. It catalyses the reaction 1-hexadecanoyl-2-(9Z,12Z-octadecadienoyl)-sn-glycero-3-phosphocholine + N-(acetyl)-sphing-4-enine = 1-(9Z,12Z-octadecadienoyl)-N-acetylsphing-4-enine + 1-hexadecanoyl-sn-glycero-3-phosphocholine. The enzyme catalyses 1-hexadecanoyl-2-(5Z,8Z,11Z,14Z-eicosatetraenoyl)-sn-glycero-3-phosphocholine + N-(acetyl)-sphing-4-enine = 1-(5Z,8Z,11Z,14Z)-eicosatetraenoyl-N-(acetyl)-sphing-4-enine + 1-hexadecanoyl-sn-glycero-3-phosphocholine. The catalysed reaction is 1-hexadecanoyl-2-(4Z,7Z,10Z,13Z,16Z,19Z-docosahexaenoyl)-sn-glycero-3-phosphocholine + N-(acetyl)-sphing-4-enine = 1-(4Z,7Z,10Z,13Z,16Z,19Z-docosahexaenoyl)-N-(acetyl)-sphing-4-enine + 1-hexadecanoyl-sn-glycero-3-phosphocholine. It carries out the reaction 1-octadecanoyl-2-(9Z-octadecenoyl)-sn-glycero-3-phosphocholine + N-(acetyl)-sphing-4-enine = 1-(9Z-octadecenoyl)-N-(acetyl)-sphing-4-enine + 1-octadecanoyl-sn-glycero-3-phosphocholine. It catalyses the reaction 1-octadecanoyl-2-(9Z,12Z)-octadecadienoyl-sn-glycero-3-phosphocholine + N-(acetyl)-sphing-4-enine = 1-(9Z,12Z-octadecadienoyl)-N-acetylsphing-4-enine + 1-octadecanoyl-sn-glycero-3-phosphocholine. The enzyme catalyses 1-(9Z-octadecenoyl)-2-hexadecanoyl-sn-glycero-3-phosphocholine + N-(acetyl)-sphing-4-enine = 1-hexadecanoyl-N-(acetyl)-sphing-4-enine + 1-(9Z-octadecenoyl)-sn-glycero-3-phosphocholine. The catalysed reaction is 1-(9Z)-octadecenoyl-2-octadecanoyl-sn-glycero-3-phosphocholine + N-(acetyl)-sphing-4-enine = 1-octadecanoyl-N-(acetyl)-sphing-4-enine + 1-(9Z-octadecenoyl)-sn-glycero-3-phosphocholine. It carries out the reaction 1,2-di-(9Z-octadecenoyl)-sn-glycero-3-phosphocholine + N-(acetyl)-sphing-4-enine = 1-(9Z-octadecenoyl)-N-(acetyl)-sphing-4-enine + 1-(9Z-octadecenoyl)-sn-glycero-3-phosphocholine. It catalyses the reaction 1-octadecanoyl-2-(5Z,8Z,11Z,14Z-eicosatetraenoyl)-sn-glycero-3-phosphocholine + N-(acetyl)-sphing-4-enine = 1-(5Z,8Z,11Z,14Z)-eicosatetraenoyl-N-(acetyl)-sphing-4-enine + 1-octadecanoyl-sn-glycero-3-phosphocholine. The enzyme catalyses a 1,2-diacyl-sn-glycero-3-phospho-L-serine + N-(acetyl)-sphing-4-enine = a 2-acyl-sn-glycero-3-phospho-L-serine + 1-O-acyl-N-(acetyl)-sphing-4-enine. The catalysed reaction is 1-octadecanoyl-2-(9Z-octadecenoyl)-sn-glycero-3-phospho-L-serine + N-(acetyl)-sphing-4-enine = 2-(9Z-octadecenoyl)-sn-glycero-3-phospho-L-serine + 1-octadecanoyl-N-(acetyl)-sphing-4-enine. It carries out the reaction a 1,2-diacyl-sn-glycero-3-phospho-L-serine + N-(acetyl)-sphing-4-enine = 1-O-acyl-N-(acetyl)-sphing-4-enine + a 1-acyl-sn-glycero-3-phospho-L-serine. It catalyses the reaction 1-octadecanoyl-2-(9Z-octadecenoyl)-sn-glycero-3-phospho-L-serine + N-(acetyl)-sphing-4-enine = 1-octadecanoyl-sn-glycero-3-phosphoserine + 1-(9Z-octadecenoyl)-N-(acetyl)-sphing-4-enine. The enzyme catalyses a 1,2-diacyl-sn-glycero-3-phospho-(1'-sn-glycerol) + N-(acetyl)-sphing-4-enine = 2-acyl-sn-glycero-3-phospho-(1'-sn-glycerol) + 1-O-acyl-N-(acetyl)-sphing-4-enine. The catalysed reaction is 1-octadecanoyl-2-(9Z-octadecenoyl)-sn-glycero-3-phospho-(1'-sn-glycerol) + N-(acetyl)-sphing-4-enine = 2-(9Z-octadecenoyl)-sn-glycero-3-phospho-(1'-sn-glycerol) + 1-octadecanoyl-N-(acetyl)-sphing-4-enine. It carries out the reaction a 1,2-diacyl-sn-glycero-3-phospho-(1'-sn-glycerol) + N-(acetyl)-sphing-4-enine = 1-O-acyl-N-(acetyl)-sphing-4-enine + 1-acyl-sn-glycero-3-phospho-(1'-sn-glycerol). It catalyses the reaction 1-octadecanoyl-2-(9Z-octadecenoyl)-sn-glycero-3-phospho-(1'-sn-glycerol) + N-(acetyl)-sphing-4-enine = 1-octadecanoyl-sn-glycero-3-phospho-(1'-sn-glycerol) + 1-(9Z-octadecenoyl)-N-(acetyl)-sphing-4-enine. The enzyme catalyses an N-acylethanolamine + a 1,2-diacyl-sn-glycero-3-phosphocholine = 2-(acylamino)ethyl fatty acid + a 2-acyl-sn-glycero-3-phosphocholine. The catalysed reaction is an N-acylethanolamine + a 1,2-diacyl-sn-glycero-3-phosphocholine = 2-(acylamino)ethyl fatty acid + a 1-acyl-sn-glycero-3-phosphocholine. It carries out the reaction N-(5Z,8Z,11Z,14Z-eicosatetraenoyl)-ethanolamine + 1,2-di-(9Z-octadecenoyl)-sn-glycero-3-phosphocholine = 2-[(5Z,8Z,11Z,14Z)-eicosatetraenoylamino]ethyl (9Z)-octadecenoate + (9Z-octadecenoyl)-sn-glycero-3-phosphocholine. It catalyses the reaction N-(9Z-octadecenoyl) ethanolamine + 1,2-di-(9Z-octadecenoyl)-sn-glycero-3-phosphocholine = 2-[(9Z)-octadecenoylamino]ethyl (9Z)-octadecenoate + (9Z-octadecenoyl)-sn-glycero-3-phosphocholine. The enzyme catalyses a 3-acyl-sn-glycerol + a 1,2-diacyl-sn-glycero-3-phosphocholine = a 1,3-diacylglycerol + a 1-acyl-sn-glycero-3-phosphocholine. The catalysed reaction is a 3-acyl-sn-glycerol + a 1,2-diacyl-sn-glycero-3-phosphocholine = a 1,3-diacylglycerol + a 2-acyl-sn-glycero-3-phosphocholine. It carries out the reaction 3-(9Z-octadecenoyl)-sn-glycerol + 1,2-di-(9Z-octadecenoyl)-sn-glycero-3-phosphocholine = 1,3-di-(9Z-octadecenoyl)-glycerol + (9Z-octadecenoyl)-sn-glycero-3-phosphocholine. It catalyses the reaction 3-hexadecanoyl-sn-glycerol + 1,2-di-(9Z-octadecenoyl)-sn-glycero-3-phosphocholine = 1-(9Z)-octadecenoyl-3-hexadecanoyl-sn-glycerol + (9Z-octadecenoyl)-sn-glycero-3-phosphocholine. The enzyme catalyses a 1-acyl-sn-glycerol + a 1,2-diacyl-sn-glycero-3-phosphocholine = a 1,3-diacylglycerol + a 2-acyl-sn-glycero-3-phosphocholine. The catalysed reaction is a 1-acyl-sn-glycerol + a 1,2-diacyl-sn-glycero-3-phosphocholine = a 1,3-diacylglycerol + a 1-acyl-sn-glycero-3-phosphocholine. It carries out the reaction 1-(9Z-octadecenoyl)-sn-glycerol + 1,2-di-(9Z-octadecenoyl)-sn-glycero-3-phosphocholine = 1,3-di-(9Z-octadecenoyl)-glycerol + (9Z-octadecenoyl)-sn-glycero-3-phosphocholine. It catalyses the reaction 1-hexadecanoyl-sn-glycerol + 1,2-di-(9Z-octadecenoyl)-sn-glycero-3-phosphocholine = 1-hexadecanoyl-3-(9Z)-octadecenoyl-sn-glycerol + (9Z-octadecenoyl)-sn-glycero-3-phosphocholine. The enzyme catalyses a 2-acylglycerol + a 1,2-diacyl-sn-glycero-3-phosphocholine = a 1,2-diacylglycerol + a 2-acyl-sn-glycero-3-phosphocholine. The catalysed reaction is a 2-acylglycerol + a 1,2-diacyl-sn-glycero-3-phosphocholine = a 1,2-diacylglycerol + a 1-acyl-sn-glycero-3-phosphocholine. It carries out the reaction 2-hexadecanoylglycerol + 1,2-di-(9Z-octadecenoyl)-sn-glycero-3-phosphocholine = 1-(9Z)-octadecenoyl-2-hexadecanoylglycerol + (9Z-octadecenoyl)-sn-glycero-3-phosphocholine. It catalyses the reaction 1-O-alkylglycerol + a 1,2-diacyl-sn-glycero-3-phosphocholine = 1-O-alkyl-3-acylglycerol + a 1-acyl-sn-glycero-3-phosphocholine. The enzyme catalyses 1-O-alkylglycerol + a 1,2-diacyl-sn-glycero-3-phosphocholine = 1-O-alkyl-3-acylglycerol + a 2-acyl-sn-glycero-3-phosphocholine. The catalysed reaction is 1-O-hexadecylglycerol + 1,2-di-(9Z-octadecenoyl)-sn-glycero-3-phosphocholine = 1-O-hexadecyl-3-(9Z)-octadecenoylglycerol + (9Z-octadecenoyl)-sn-glycero-3-phosphocholine. It carries out the reaction 1-O-alkyl-2-acyl-sn-glycerol + a 1,2-diacyl-sn-glycero-3-phosphocholine = 1-O-alkyl-2,3-diacyl-sn-glycerol + a 2-acyl-sn-glycero-3-phosphocholine. It catalyses the reaction 1-O-alkyl-2-acyl-sn-glycerol + a 1,2-diacyl-sn-glycero-3-phosphocholine = 1-O-alkyl-2,3-diacyl-sn-glycerol + a 1-acyl-sn-glycero-3-phosphocholine. The enzyme catalyses 1-O-hexadecyl-2-acetyl-sn-glycerol + 1,2-di-(9Z-octadecenoyl)-sn-glycero-3-phosphocholine = 1-O-hexadecyl-2-acetyl-3-(9Z)-octadecenoyl-sn-glycerol + (9Z-octadecenoyl)-sn-glycero-3-phosphocholine. The catalysed reaction is 1-O-hexadecyl-2-O-methyl-sn-glycerol + 1,2-di-(9Z-octadecenoyl)-sn-glycero-3-phosphocholine = 1-O-hexadecyl-2-O-methyl-3-(9Z)-octadecenoyl-sn-glycerol + (9Z-octadecenoyl)-sn-glycero-3-phosphocholine. It carries out the reaction a 1,2-diacyl-sn-glycero-3-phosphoethanolamine + H2O = a 1-acyl-sn-glycero-3-phosphoethanolamine + a fatty acid + H(+). It catalyses the reaction 1-acyl-2-(5Z,8Z,11Z,14Z)-eicosatetraenoyl-sn-glycero-3-phosphoethanolamine + H2O = a 1-acyl-sn-glycero-3-phosphoethanolamine + (5Z,8Z,11Z,14Z)-eicosatetraenoate + H(+). The enzyme catalyses a 1,2-diacyl-sn-glycero-3-phospho-(1'-sn-glycerol) + H2O = 1-acyl-sn-glycero-3-phospho-(1'-sn-glycerol) + a fatty acid + H(+). The catalysed reaction is 1-hexadecanoyl-2-(9Z-octadecenoyl)-sn-glycero-3-phospho-(1'-sn-glycerol) + H2O = 1-hexadecanoyl-sn-glycero-3-phospho-(1'-sn-glycerol) + (9Z)-octadecenoate + H(+). It carries out the reaction a 1,2-diacyl-sn-glycero-3-phospho-(1'-sn-glycerol) + H2O = 2-acyl-sn-glycero-3-phospho-(1'-sn-glycerol) + a fatty acid + H(+). It catalyses the reaction 1-hexadecanoyl-2-(9Z-octadecenoyl)-sn-glycero-3-phospho-(1'-sn-glycerol) + H2O = 2-(9Z-octadecenoyl)-sn-glycero-3-phospho-(1'-sn-glycerol) + hexadecanoate + H(+). Functionally, has dual calcium-independent phospholipase and O-acyltransferase activities with a potential role in glycerophospholipid homeostasis and remodeling of acyl groups of lipophilic alcohols present in acidic cellular compartments. Catalyzes hydrolysis of the ester bond of the fatty acyl group attached at sn-1 or sn-2 position of phospholipids (phospholipase A1 or A2 activity) and transfer it to the hydroxyl group at the first carbon of lipophilic alcohols (O-acyltransferase activity). Among preferred fatty acyl donors are phosphatidylcholines, phosphatidylethanolamines, phosphatidylglycerols and phosphatidylserines. Favors sn-2 over sn-1 deacylation of unsaturated fatty acyl groups of phosphatidylcholines, phosphatidylethanolamines, and phosphatidylglycerols. Among preferred fatty acyl acceptors are natural lipophilic alcohols including short-chain ceramide N-acetyl-sphingosine (C2 ceramide), alkylacylglycerols, monoacylglycerols, and acylethanolamides such as anandamide and oleoylethanolamide. Selectively hydrolyzes the sn-1 fatty acyl group of truncated oxidized phospholipids and may play a role in detoxification of reactive oxidized phospholipids during oxidative stress. Required for normal phospholipid degradation in alveolar macrophages with potential implications in the clearance of pulmonary surfactant, which is mainly composed of dipalmitoylphosphatidylcholine (1,2-dihexadecanoyl-sn-glycero-3-phosphocholine). Involved in the first step of bis(monoacylglycero)phosphate (BMP) de novo synthesis from phosphatidylglycerol (1,2-diacyl-sn-glycero-3-phospho-(1'-sn-glycerol), PG). BMP is an important player in cargo sorting and degradation, regulation of cellular cholesterol levels and intercellular communication. At neutral pH, hydrolyzes the sn-1 fatty acyl group of the lysophosphatidylcholines. This is Lysosomal phospholipase A and acyltransferase (PLA2G15) from Canis lupus familiaris (Dog).